The chain runs to 1433 residues: Regulatory protein CAT8 (1433 aa).

Positions 20 to 38 are enriched in polar residues; that stretch reads GSQALSGPSISNRTSSSEA. Positions 20–40 are disordered; it reads GSQALSGPSISNRTSSSEANP. A DNA-binding region (zn(2)-C6 fungal-type) is located at residues 70–97; sequence CDRCRSKKTRCDGKRPQCSQCAAVGFEC. Over residues 936–946 the composition is skewed to polar residues; the sequence is KPLFGSQSKNS. Disordered regions lie at residues 936–1024, 1137–1162, 1200–1236, and 1324–1433; these read KPLF…DTKK, QNPE…NNLS, SASA…ILGS, and LNPT…QNAK. 2 stretches are compositionally biased toward basic and acidic residues: residues 947 to 965 and 994 to 1005; these read LENR…EHEY and LKYEKDAKRNAK. 3 stretches are compositionally biased toward polar residues: residues 1138 to 1162, 1221 to 1235, and 1326 to 1348; these read NPEN…NNLS, PPST…SILG, and PTDS…SNQR. Positions 1349–1362 are enriched in low complexity; the sequence is SLSSGNDSKGDSSS. 2 stretches are compositionally biased toward polar residues: residues 1363 to 1391 and 1418 to 1433; these read QENS…SGPS and SNTD…QNAK.

In terms of processing, could be the target of the SNF1/CAT1 - SNF4/CAT3 kinase complex.

It is found in the nucleus. In terms of biological role, activator of the gluconeogenic enzymes FBP1 and PCK1 genes. The sequence is that of Regulatory protein CAT8 (CAT8) from Saccharomyces cerevisiae (strain ATCC 204508 / S288c) (Baker's yeast).